Reading from the N-terminus, the 305-residue chain is Methionyl-tRNA formyltransferase (305 aa).

111 to 114 (SLLP) serves as a coordination point for (6S)-5,6,7,8-tetrahydrofolate.

This sequence belongs to the Fmt family.

The catalysed reaction is L-methionyl-tRNA(fMet) + (6R)-10-formyltetrahydrofolate = N-formyl-L-methionyl-tRNA(fMet) + (6S)-5,6,7,8-tetrahydrofolate + H(+). Functionally, attaches a formyl group to the free amino group of methionyl-tRNA(fMet). The formyl group appears to play a dual role in the initiator identity of N-formylmethionyl-tRNA by promoting its recognition by IF2 and preventing the misappropriation of this tRNA by the elongation apparatus. The polypeptide is Methionyl-tRNA formyltransferase (Campylobacter jejuni (strain RM1221)).